Reading from the N-terminus, the 113-residue chain is Large ribosomal subunit protein P1z (113 aa).

Positions 87 to 113 are disordered; sequence AAAPAKEEKKDEPAEESDGDLGFGLFD. Ser-103 is subject to Phosphoserine.

This sequence belongs to the eukaryotic ribosomal protein P1/P2 family. In terms of assembly, P1 and P2 exist as dimers at the large ribosomal subunit.

Its function is as follows. Plays an important role in the elongation step of protein synthesis. This is Large ribosomal subunit protein P1z (RPP1B) from Arabidopsis thaliana (Mouse-ear cress).